Here is a 616-residue protein sequence, read N- to C-terminus: Chaperone protein HscA homolog (616 aa).

This sequence belongs to the heat shock protein 70 family.

Functionally, chaperone involved in the maturation of iron-sulfur cluster-containing proteins. Has a low intrinsic ATPase activity which is markedly stimulated by HscB. This is Chaperone protein HscA homolog from Histophilus somni (strain 129Pt) (Haemophilus somnus).